Consider the following 262-residue polypeptide: CD99 antigen-like protein 2 (262 aa).

Positions Met-1–Gly-25 are cleaved as a signal peptide. Residues Asp-26–Gly-185 lie on the Extracellular side of the membrane. The interval Glu-38 to Val-181 is disordered. 2 stretches are compositionally biased toward low complexity: residues Thr-49–Thr-60 and Val-98–Phe-119. Composition is skewed to basic and acidic residues over residues Leu-125–Arg-136 and Tyr-159–Gly-168. An O-linked (Xyl...) (chondroitin sulfate) serine glycan is attached at Ser-178. Residues Thr-186–Ile-206 traverse the membrane as a helical segment. Residues Ser-207–Ile-262 are Cytoplasmic-facing.

It belongs to the CD99 family. O-glycosylated. In terms of tissue distribution, detected in cerebrospinal fluid (at protein level). Expressed in many tissues, with low expression in thymus.

The protein localises to the cell membrane. It is found in the cell junction. The protein resides in the secreted. Plays a role in a late step of leukocyte extravasation helping cells to overcome the endothelial basement membrane. Acts at the same site as, but independently of, PECAM1. Homophilic adhesion molecule, but these interactions may not be required for cell aggregation. This is CD99 antigen-like protein 2 (CD99L2) from Homo sapiens (Human).